Here is a 150-residue protein sequence, read N- to C-terminus: Dual specificity protein phosphatase 23 (150 aa).

A Tyrosine-protein phosphatase domain is found at 7–150; the sequence is NFSWVLPGRL…AVFQFYQRTK (144 aa). C95 acts as the Phosphocysteine intermediate in catalysis.

Belongs to the protein-tyrosine phosphatase family. Non-receptor class dual specificity subfamily. In terms of tissue distribution, widely expressed. Highly expressed in spleen, prostate, colon, adrenal gland, mammary gland, thyroid and trachea. Expressed at lower level in uterus, small intestine, bladder, bone marrow, brain, spinal cord and stomach.

The protein localises to the cytoplasm. The protein resides in the cytosol. It is found in the nucleus. It catalyses the reaction O-phospho-L-tyrosyl-[protein] + H2O = L-tyrosyl-[protein] + phosphate. The enzyme catalyses O-phospho-L-seryl-[protein] + H2O = L-seryl-[protein] + phosphate. It carries out the reaction O-phospho-L-threonyl-[protein] + H2O = L-threonyl-[protein] + phosphate. Its function is as follows. Protein phosphatase that mediates dephosphorylation of proteins phosphorylated on Tyr and Ser/Thr residues. In vitro, it can dephosphorylate p44-ERK1 (MAPK3) but not p54 SAPK-beta (MAPK10) in vitro. Able to enhance activation of JNK and p38 (MAPK14). The sequence is that of Dual specificity protein phosphatase 23 (DUSP23) from Homo sapiens (Human).